Reading from the N-terminus, the 206-residue chain is Outer-membrane lipoprotein carrier protein (206 aa).

Positions 1–21 are cleaved as a signal peptide; the sequence is MKKLLCAVLLSPLLYSNAVLA.

It belongs to the LolA family. In terms of assembly, monomer.

Its subcellular location is the periplasm. Participates in the translocation of lipoproteins from the inner membrane to the outer membrane. Only forms a complex with a lipoprotein if the residue after the N-terminal Cys is not an aspartate (The Asp acts as a targeting signal to indicate that the lipoprotein should stay in the inner membrane). The protein is Outer-membrane lipoprotein carrier protein of Shewanella sp. (strain MR-7).